The primary structure comprises 37 residues: Large ribosomal subunit protein bL36 (37 aa).

Belongs to the bacterial ribosomal protein bL36 family.

In Deinococcus deserti (strain DSM 17065 / CIP 109153 / LMG 22923 / VCD115), this protein is Large ribosomal subunit protein bL36.